The sequence spans 129 residues: Transcription antitermination protein NusB (129 aa).

It belongs to the NusB family.

Involved in transcription antitermination. Required for transcription of ribosomal RNA (rRNA) genes. Binds specifically to the boxA antiterminator sequence of the ribosomal RNA (rrn) operons. The protein is Transcription antitermination protein NusB of Bacillus licheniformis (strain ATCC 14580 / DSM 13 / JCM 2505 / CCUG 7422 / NBRC 12200 / NCIMB 9375 / NCTC 10341 / NRRL NRS-1264 / Gibson 46).